A 468-amino-acid polypeptide reads, in one-letter code: Kynureninase 2 (468 aa).

Residues leucine 134, threonine 135, 162 to 165 (FPSD), aspartate 247, histidine 250, and tyrosine 272 each bind pyridoxal 5'-phosphate. An N6-(pyridoxal phosphate)lysine modification is found at lysine 273. Positions 312 and 340 each coordinate pyridoxal 5'-phosphate.

It belongs to the kynureninase family. As to quaternary structure, homodimer. Pyridoxal 5'-phosphate serves as cofactor.

It is found in the cytoplasm. The catalysed reaction is L-kynurenine + H2O = anthranilate + L-alanine + H(+). It catalyses the reaction 3-hydroxy-L-kynurenine + H2O = 3-hydroxyanthranilate + L-alanine + H(+). The protein operates within amino-acid degradation; L-kynurenine degradation; L-alanine and anthranilate from L-kynurenine: step 1/1. Its pathway is cofactor biosynthesis; NAD(+) biosynthesis; quinolinate from L-kynurenine: step 2/3. Its function is as follows. Catalyzes the cleavage of L-kynurenine (L-Kyn) and L-3-hydroxykynurenine (L-3OHKyn) into anthranilic acid (AA) and 3-hydroxyanthranilic acid (3-OHAA), respectively. The polypeptide is Kynureninase 2 (bna5-2) (Aspergillus oryzae (strain ATCC 42149 / RIB 40) (Yellow koji mold)).